A 190-amino-acid polypeptide reads, in one-letter code: Small ribosomal subunit protein uS4 (190 aa).

An S4 RNA-binding domain is found at 105–181; that stretch reads RRLQTLVYKL…RKKAKAAEGG (77 aa). The interval 163–190 is disordered; it reads GGGRPGRVRRKKAKAAEGGDGDAEEDEE. Residues 181 to 190 are compositionally biased toward acidic residues; it reads GDGDAEEDEE.

The protein belongs to the universal ribosomal protein uS4 family.

The chain is Small ribosomal subunit protein uS4 (RPS9) from Podospora anserina (Pleurage anserina).